Consider the following 521-residue polypeptide: Cytochrome P450 1A1 (521 aa).

A substrate-binding site is contributed by Phe-229. Cys-463 is a heme binding site.

It belongs to the cytochrome P450 family. Heme is required as a cofactor.

The protein resides in the endoplasmic reticulum membrane. It is found in the microsome membrane. The enzyme catalyses an organic molecule + reduced [NADPH--hemoprotein reductase] + O2 = an alcohol + oxidized [NADPH--hemoprotein reductase] + H2O + H(+). Functionally, cytochromes P450 are a group of heme-thiolate monooxygenases. They oxidize a variety of structurally unrelated compounds, including steroids, fatty acids, and xenobiotics. This Limanda limanda (Common dab) protein is Cytochrome P450 1A1 (cyp1a1).